The sequence spans 875 residues: Neurotrypsin (875 aa).

The signal sequence occupies residues 1–20 (MTLARFVLALVLGALPEVVX). N-linked (GlcNAc...) asparagine glycosylation occurs at N26. Residues 31 to 88 (HRPRHSPPTGPHYPYYLPTQQRPPRTRPPPPLPRFPRPPRALPAQRPHALQAGHTPRP) form a disordered region. The span at 56 to 71 (TRPPPPLPRFPRPPRA) shows a compositional bias: pro residues. The 73-residue stretch at 93–165 (CPAGEPWVSV…GKVDWGYCDC (73 aa)) folds into the Kringle domain. 20 cysteine pairs are disulfide-bonded: C93/C165, C109/C149, C138/C163, C195/C259, C208/C269, C239/C249, C305/C369, C318/C379, C349/C359, C412/C475, C425/C485, C455/C465, C525/C589, C538/C599, C569/C579, C619/C750, C661/C677, C765/C831, C794/C808, and C821/C850. SRCR domains lie at 170-271 (IRLR…TCSF), 280-381 (IRLV…SCTP), 387-487 (IRLA…ACYP), and 500-601 (VRLM…ICDY). The segment at 619–630 (CGLRLLHRRQKR) is zymogen activation region. The Peptidase S1 domain occupies 631-874 (IIGGKNSLRG…FVPWIKSVTK (244 aa)). H676 serves as the catalytic Charge relay system. The N-linked (GlcNAc...) asparagine glycan is linked to N683. The active-site Charge relay system is D726. The active-site Charge relay system is the S825.

It belongs to the peptidase S1 family.

It localises to the secreted. Plays a role in neuronal plasticity and the proteolytic action may subserve structural reorganizations associated with learning and memory operations. The polypeptide is Neurotrypsin (PRSS12) (Nomascus leucogenys (Northern white-cheeked gibbon)).